Reading from the N-terminus, the 279-residue chain is Undecaprenyl-diphosphatase (279 aa).

Transmembrane regions (helical) follow at residues 2–22, 44–64, 85–105, 113–133, 163–183, 188–208, 225–245, and 255–275; these read LFIE…TEWL, AFME…VIVI, WQLW…AVPL, FNHM…FLWI, VLSI…AIIL, TVAA…YSGL, LLVL…VIKL, and FTVF…YSVF.

It belongs to the UppP family.

Its subcellular location is the cell membrane. The catalysed reaction is di-trans,octa-cis-undecaprenyl diphosphate + H2O = di-trans,octa-cis-undecaprenyl phosphate + phosphate + H(+). Catalyzes the dephosphorylation of undecaprenyl diphosphate (UPP). Confers resistance to bacitracin. This is Undecaprenyl-diphosphatase from Streptococcus equi subsp. equi (strain 4047).